Here is a 628-residue protein sequence, read N- to C-terminus: Modular serine protease (628 aa).

The N-terminal stretch at 1–25 (MQLISFLSNPLFFCALLLKFRTIFA) is a signal peptide. 4 LDL-receptor class A domains span residues 26-64 (ACDS…LTCV), 69-107 (HCTK…LRCG), 122-163 (NCKE…ELCG), and 166-204 (ECPA…LLCN). 12 disulfide bridges follow: cysteine 27/cysteine 39, cysteine 34/cysteine 52, cysteine 46/cysteine 63, cysteine 70/cysteine 82, cysteine 77/cysteine 95, cysteine 89/cysteine 106, cysteine 123/cysteine 135, cysteine 130/cysteine 149, cysteine 143/cysteine 162, cysteine 167/cysteine 179, cysteine 174/cysteine 192, and cysteine 186/cysteine 203. A glycan (N-linked (GlcNAc...) asparagine) is linked at asparagine 36. Asparagine 204 is a glycosylation site (N-linked (GlcNAc...) asparagine). Sushi domains lie at 222–285 (LGCP…KCVK) and 300–356 (ALCT…RCEQ). 4 disulfide bridges follow: cysteine 224–cysteine 270, cysteine 256–cysteine 283, cysteine 302–cysteine 341, and cysteine 326–cysteine 354. Positions 369-621 (SSGGYTINNT…FEDMILNAMN (253 aa)) constitute a Peptidase S1 domain. Asparagine 376 carries an N-linked (GlcNAc...) asparagine glycan. Cysteine 399 and cysteine 415 are disulfide-bonded. Active-site charge relay system residues include histidine 414, aspartate 472, and serine 563. The N-linked (GlcNAc...) asparagine glycan is linked to asparagine 621.

The protein belongs to the peptidase S1 family. In terms of processing, may be proteolytically cleaved via an autocatalytic mechanism.

Its subcellular location is the secreted. Functionally, serine protease that plays a key role in innate immunity by activating the Toll pathway in response to infection with Gram-positive bacteria and fungi. During Gram-positive infection, acts downstream of PGRP-SA and upstream of Grass and Spz, and therefore appears to function in a pathway that links detection of Gram-positive lysine-type peptidoglycans to Toll activation. Functions in a separate pathway to the psh-mediated activation of the Toll pathway. The sequence is that of Modular serine protease from Drosophila melanogaster (Fruit fly).